Reading from the N-terminus, the 526-residue chain is Phosphoenolpyruvate carboxykinase (ATP) 2 (526 aa).

Substrate contacts are provided by Arg-55, Tyr-190, and Lys-196. Residues Lys-196, His-215, and 231–239 (GLSGTGKTT) each bind ATP. Mn(2+)-binding residues include Lys-196 and His-215. Asp-252 contacts Mn(2+). Residues Glu-280, Arg-317, and Thr-442 each contribute to the ATP site. Arg-317 lines the substrate pocket.

It belongs to the phosphoenolpyruvate carboxykinase (ATP) family. Requires Mn(2+) as cofactor.

Its subcellular location is the cytoplasm. The catalysed reaction is oxaloacetate + ATP = phosphoenolpyruvate + ADP + CO2. It participates in carbohydrate biosynthesis; gluconeogenesis. In terms of biological role, involved in the gluconeogenesis. Catalyzes the conversion of oxaloacetate (OAA) to phosphoenolpyruvate (PEP) through direct phosphoryl transfer between the nucleoside triphosphate and OAA. The chain is Phosphoenolpyruvate carboxykinase (ATP) 2 from Moorella thermoacetica (strain ATCC 39073 / JCM 9320).